We begin with the raw amino-acid sequence, 139 residues long: Nucleoside diphosphate kinase (139 aa).

6 residues coordinate ATP: lysine 11, phenylalanine 59, arginine 87, threonine 93, arginine 104, and asparagine 114. Residue histidine 117 is the Pros-phosphohistidine intermediate of the active site.

This sequence belongs to the NDK family. As to quaternary structure, homotetramer. Requires Mg(2+) as cofactor.

It is found in the cytoplasm. It carries out the reaction a 2'-deoxyribonucleoside 5'-diphosphate + ATP = a 2'-deoxyribonucleoside 5'-triphosphate + ADP. It catalyses the reaction a ribonucleoside 5'-diphosphate + ATP = a ribonucleoside 5'-triphosphate + ADP. Its function is as follows. Major role in the synthesis of nucleoside triphosphates other than ATP. The ATP gamma phosphate is transferred to the NDP beta phosphate via a ping-pong mechanism, using a phosphorylated active-site intermediate. This is Nucleoside diphosphate kinase from Pasteurella multocida (strain Pm70).